Here is a 225-residue protein sequence, read N- to C-terminus: Plasma membrane-associated cation-binding protein 1 (225 aa).

Gly2 is lipidated: N-myristoyl glycine. Thr32 is modified (phosphothreonine). Ser107 carries the post-translational modification Phosphoserine. A compositionally biased stretch (basic and acidic residues) spans 140-197 (PVEEVKAEEPAKTEEPAKTEGTSGEKEEIVEETKKGETPETAVVEEKKPEVEEKKEEA). The disordered stretch occupies residues 140-225 (PVEEVKAEEP…TAPVAEPPKP (86 aa)). Phosphothreonine is present on residues Thr152 and Thr177.

It belongs to the DREPP family. Interacts with Turnip mosaic virus (TuMV) P3N-PIPO. The cofactor is Cu(2+). As to expression, mostly expressed in the basal region of hypocotyls. Expressed in seedlings, roots, shoots, stems, leaves (e.g. in epidermis and vascular tissues), flowers (e.g. in pistils and anthers) and siliques (at protein level).

It localises to the cell membrane. It is found in the cytoplasm. Its subcellular location is the cytoskeleton. The protein localises to the cell junction. The protein resides in the plasmodesma. In terms of biological role, may be involved in intracellular signaling through interaction with PtdInsPs and calmodulin (CaM); may keep PtdInsPs attached to the plasma membrane until Ca(2+)-CaM reaches a competitive concentration subsequent to an increase triggered by a stimulus, thus leading to PtdInsPs release and subsequent activation of InsPs-dependent signaling cascade. Interacts competitively at the N-terminus with calcium ions and CaM (in a calcium-dependent manner), and with the phosphatidylinositol phosphates PtdIns(3,4,5)P(3), PtdIns(3,4)P(2), PtdIns(4,5)P(2) and PtdIns(3,5)P(2). Also binds weakly to PtdIns(3)P, PtdIns(4)P and PtdIns(5)P. Negative regulator of hypocotyl cell elongation by destabilizing cortical microtubules in a calcium-dependent manner. Binds directly to and destabilized microtubules to enhance microtubule depolymerization when cytoplasmic calcium increases. In case of Turnip mosaic virus (TuMV) infection, confers sensitivity by promoting viral cell-to-cell movement through interaction with viral P3N-PIPO. The polypeptide is Plasma membrane-associated cation-binding protein 1 (PCAP1) (Arabidopsis thaliana (Mouse-ear cress)).